Here is a 188-residue protein sequence, read N- to C-terminus: Putative lipoprotein LprB (188 aa).

The N-terminal stretch at 1–27 (MRCDVRALALAARGLIELMIVIPMVAG) is a signal peptide. A lipid anchor (N-palmitoyl cysteine) is attached at C28. C28 carries the S-diacylglycerol cysteine lipid modification.

It is found in the cell membrane. This is Putative lipoprotein LprB (lprB) from Mycobacterium leprae (strain TN).